Consider the following 118-residue polypeptide: Ribosome-binding factor A (118 aa).

Belongs to the RbfA family. Monomer. Binds 30S ribosomal subunits, but not 50S ribosomal subunits or 70S ribosomes.

The protein resides in the cytoplasm. One of several proteins that assist in the late maturation steps of the functional core of the 30S ribosomal subunit. Associates with free 30S ribosomal subunits (but not with 30S subunits that are part of 70S ribosomes or polysomes). Required for efficient processing of 16S rRNA. May interact with the 5'-terminal helix region of 16S rRNA. The sequence is that of Ribosome-binding factor A from Geobacter metallireducens (strain ATCC 53774 / DSM 7210 / GS-15).